Reading from the N-terminus, the 89-residue chain is Small ribosomal subunit protein uS15 (89 aa).

It belongs to the universal ribosomal protein uS15 family. As to quaternary structure, part of the 30S ribosomal subunit. Forms a bridge to the 50S subunit in the 70S ribosome, contacting the 23S rRNA.

Its function is as follows. One of the primary rRNA binding proteins, it binds directly to 16S rRNA where it helps nucleate assembly of the platform of the 30S subunit by binding and bridging several RNA helices of the 16S rRNA. Functionally, forms an intersubunit bridge (bridge B4) with the 23S rRNA of the 50S subunit in the ribosome. This is Small ribosomal subunit protein uS15 from Polynucleobacter necessarius subsp. necessarius (strain STIR1).